The following is a 757-amino-acid chain: Xaa-Pro dipeptidyl-peptidase (757 aa).

Active-site charge relay system residues include Ser348, Asp468, and His498.

It belongs to the peptidase S15 family. As to quaternary structure, homodimer.

It is found in the cytoplasm. The catalysed reaction is Hydrolyzes Xaa-Pro-|- bonds to release unblocked, N-terminal dipeptides from substrates including Ala-Pro-|-p-nitroanilide and (sequentially) Tyr-Pro-|-Phe-Pro-|-Gly-Pro-|-Ile.. Functionally, removes N-terminal dipeptides sequentially from polypeptides having unsubstituted N-termini provided that the penultimate residue is proline. The polypeptide is Xaa-Pro dipeptidyl-peptidase (Streptococcus pneumoniae serotype 19F (strain G54)).